The sequence spans 285 residues: Nucleotide-binding protein Geob_2284 (285 aa).

8 to 15 lines the ATP pocket; the sequence is GLSGSGKS. 59–62 serves as a coordination point for GTP; it reads DIRG.

It belongs to the RapZ-like family.

In terms of biological role, displays ATPase and GTPase activities. The sequence is that of Nucleotide-binding protein Geob_2284 from Geotalea daltonii (strain DSM 22248 / JCM 15807 / FRC-32) (Geobacter daltonii).